We begin with the raw amino-acid sequence, 334 residues long: Thioredoxin reductase (334 aa).

Residues 11-14 (SGAG), 40-41 (TA), Q45, N54, C148, D294, and 301-303 (RQA) contribute to the FAD site. C145 and C148 form a disulfide bridge.

It belongs to the class-II pyridine nucleotide-disulfide oxidoreductase family. Homodimer. Requires FAD as cofactor.

It catalyses the reaction [thioredoxin]-dithiol + NADP(+) = [thioredoxin]-disulfide + NADPH + H(+). Component of the thioredoxin-thioredoxin reductase system which may be involved in biosynthesis of penicillins and cephalosporins and may be important in determining the thiol-disulfide redox balance. This is Thioredoxin reductase (TRR1) from Penicillium chrysogenum (Penicillium notatum).